A 918-amino-acid polypeptide reads, in one-letter code: DNA ligase 1 (918 aa).

The segment covering methionine 1 to glutamate 15 has biased composition (polar residues). Residues methionine 1–serine 271 are disordered. Residues glycine 16–valine 54 show a composition bias toward basic and acidic residues. Phosphoserine is present on residues serine 50, serine 52, serine 66, and serine 67. Position 78 is a phosphothreonine (threonine 78). Residues valine 81–serine 92 show a composition bias toward low complexity. Over residues proline 100 to isoleucine 114 the composition is skewed to polar residues. A compositionally biased stretch (basic residues) spans proline 120–proline 130. An N6-acetyllysine modification is found at lysine 145. The residue at position 195 (threonine 195) is a Phosphothreonine. An N6-acetyllysine modification is found at lysine 227. Phosphoserine occurs at positions 230 and 231. Threonine 234 carries the phosphothreonine modification. The span at valine 240–glycine 259 shows a compositional bias: basic and acidic residues. Position 566 (glutamate 566) interacts with ATP. The active-site N6-AMP-lysine intermediate is lysine 568. Positions 573 and 621 each coordinate ATP. Mg(2+) is bound at residue glutamate 621. Positions lysine 642–lysine 644 are interaction with target DNA. Glutamate 720 contributes to the Mg(2+) binding site. Residues lysine 725 and lysine 744 each coordinate ATP. A Phosphothreonine modification is found at threonine 798. Phosphoserine is present on residues serine 801, serine 908, serine 909, and serine 913. The interval aspartate 881–tyrosine 918 is disordered. Over residues glutamate 885–aspartate 910 the composition is skewed to polar residues.

Belongs to the ATP-dependent DNA ligase family. In terms of assembly, interacts with PCNA. Interacts with POLB. The cofactor is Mg(2+).

The protein localises to the nucleus. The enzyme catalyses ATP + (deoxyribonucleotide)n-3'-hydroxyl + 5'-phospho-(deoxyribonucleotide)m = (deoxyribonucleotide)n+m + AMP + diphosphate.. DNA ligase that seals nicks in double-stranded during DNA repair. Also involved in DNA replication and DNA recombination. The protein is DNA ligase 1 (Lig1) of Rattus norvegicus (Rat).